Reading from the N-terminus, the 169-residue chain is Peptidyl-prolyl cis-trans isomerase (169 aa).

Residues 5 to 168 form the PPIase cyclophilin-type domain; the sequence is FFDMTIGGQP…SEVKIAKCGQ (164 aa).

This sequence belongs to the cyclophilin-type PPIase family.

It localises to the cytoplasm. The enzyme catalyses [protein]-peptidylproline (omega=180) = [protein]-peptidylproline (omega=0). With respect to regulation, binds cyclosporin A (CsA). CsA mediates some of its effects via an inhibitory action on PPIase. PPIases accelerate the folding of proteins. It catalyzes the cis-trans isomerization of proline imidic peptide bonds in oligopeptides. This chain is Peptidyl-prolyl cis-trans isomerase, found in Unspecified eudicot DB-1992.